A 464-amino-acid chain; its full sequence is Cyclic 2,3-diphosphoglycerate synthetase (464 aa).

It belongs to the cyclic 2,3-diphosphoglycerate synthetase family.

It is found in the cytoplasm. The enzyme catalyses (2R)-2,3-bisphosphoglycerate + ATP + H(+) = cyclic (2R)-2,3-bisphosphoglycerate + ADP + phosphate. Activity decreases in response to phosphate limitation. Catalyzes the formation of cyclic 2,3-diphosphoglycerate (cDPG) by formation of an intramolecular phosphoanhydride bond at the expense of ATP. Not able to catalyze cDPG hydrolysis. May be involved in osmotic balance. The sequence is that of Cyclic 2,3-diphosphoglycerate synthetase (cpgS) from Methanothermobacter thermautotrophicus (strain ATCC 29096 / DSM 1053 / JCM 10044 / NBRC 100330 / Delta H) (Methanobacterium thermoautotrophicum).